The chain runs to 451 residues: NADH-quinone oxidoreductase subunit D (451 aa).

The protein belongs to the complex I 49 kDa subunit family. In terms of assembly, NDH-1 is composed of 14 different subunits. Subunits NuoB, C, D, E, F, and G constitute the peripheral sector of the complex.

Its subcellular location is the cell inner membrane. It carries out the reaction a quinone + NADH + 5 H(+)(in) = a quinol + NAD(+) + 4 H(+)(out). In terms of biological role, NDH-1 shuttles electrons from NADH, via FMN and iron-sulfur (Fe-S) centers, to quinones in the respiratory chain. The immediate electron acceptor for the enzyme in this species is believed to be a menaquinone. Couples the redox reaction to proton translocation (for every two electrons transferred, four hydrogen ions are translocated across the cytoplasmic membrane), and thus conserves the redox energy in a proton gradient. The sequence is that of NADH-quinone oxidoreductase subunit D from Salinibacter ruber (strain DSM 13855 / M31).